The following is a 305-amino-acid chain: uncharacterized protein (305 aa).

Transmembrane regions (helical) follow at residues 52–72, 89–109, and 120–140; these read TINL…SKII, IAGF…FIAA, and VIAI…GSLS.

It belongs to the MscS (TC 1.A.23) family.

It localises to the cell membrane. This is an uncharacterized protein from Buchnera aphidicola subsp. Acyrthosiphon pisum (strain APS) (Acyrthosiphon pisum symbiotic bacterium).